The sequence spans 448 residues: Phosphoglucosamine mutase (448 aa).

The active-site Phosphoserine intermediate is Ser102. Positions 102, 241, 243, and 245 each coordinate Mg(2+). A Phosphoserine modification is found at Ser102.

The protein belongs to the phosphohexose mutase family. Requires Mg(2+) as cofactor. Activated by phosphorylation.

It carries out the reaction alpha-D-glucosamine 1-phosphate = D-glucosamine 6-phosphate. Functionally, catalyzes the conversion of glucosamine-6-phosphate to glucosamine-1-phosphate. This is Phosphoglucosamine mutase from Ruegeria pomeroyi (strain ATCC 700808 / DSM 15171 / DSS-3) (Silicibacter pomeroyi).